The following is a 36-amino-acid chain: TGTSCISPKQCTEPCRAKGCKHGKCMNRKCHCMLCL.

Cystine bridges form between cysteine 5–cysteine 25, cysteine 11–cysteine 30, cysteine 15–cysteine 32, and cysteine 20–cysteine 35.

Expressed by the venom gland.

It is found in the secreted. Its function is as follows. Blocks Shaker B channels expressed in Sf9 cells, with a dissociation constant of 52 nM. The sequence is that of Potassium channel toxin alpha-KTx 6.14 from Hoffmannihadrurus gertschi (Scorpion).